Reading from the N-terminus, the 521-residue chain is Lymphocyte activation gene 3 protein (521 aa).

The signal sequence occupies residues 1-23; the sequence is MREDLLLGFLLLGLLWEAPVVSS. Topologically, residues 24–442 are extracellular; it reads GPGKELPVVW…ISGDLKGGHL (419 aa). The Ig-like V-type domain maps to 37–163; it reads GAPVHLPCSL…LSCSLRLRVG (127 aa). Positions 37 to 246 are interaction with FGL1; sequence GAPVHLPCSL…LTYRDGFNVS (210 aa). C44 and C156 are disulfide-bonded. 3 consecutive Ig-like C2-type domains span residues 165-246, 258-341, and 345-412; these read ASMI…FNVS, PVAP…ATVT, and ITVT…EGQR. N-linked (GlcNAc...) asparagine glycosylation occurs at N184. The cysteines at positions 185 and 235 are disulfide-linked. 4 N-linked (GlcNAc...) asparagine glycosylation sites follow: N244, N309, N337, and N381. A disulfide bridge connects residues C276 and C327. A disulfide bond links C363 and C405. The tract at residues 422 to 442 is connecting peptide; that stretch reads ESSSGAHSARRISGDLKGGHL. A helical transmembrane segment spans residues 443–463; that stretch reads VLVLILGALSLFLLVAGAFGF. At 464–521 the chain is on the cytoplasmic side; the sequence is HWWRKQLLLRRFSALEHGIQPFPAQRKIEELERELETEMGQEPEPEPEPQLEPEPRQL. A KIEELE motif motif is present at residues 490–495; the sequence is KIEELE. Residues 493–518 form a 13 X 2 AA tandem repeats of E-X region; sequence ELERELETEMGQEPEPEPEPQLEPEP. The disordered stretch occupies residues 493–521; the sequence is ELERELETEMGQEPEPEPEPQLEPEPRQL. Positions 500 to 514 are enriched in acidic residues; that stretch reads TEMGQEPEPEPEPQL.

It belongs to the LAG3 family. In terms of assembly, interacts with MHC class II (MHC-II); selectively recognizes stable complexes of peptide and MHC-II. Interacts with FGL1 (via the Fibrinogen C-terminal domain). In terms of processing, proteolytically cleaved by ADAM10 and ADAM17 within the connecting peptide region, leading to release of Secreted lymphocyte activation gene 3 protein (sLAG-3). ADAM10 mediates constitutive cleavage, but cleavage increases following T-cell activation, whereas shedding by ADAM17 is induced by TCR signaling in a PRKCQ-dependent manner. As to expression, primarily expressed in activated CD4(+) and CD8(+) T-cells. Also expressed in a subset of regulatory T-cells (Tregs), such as natural CD4(+)CD25(+) Tregs. Also expressed on plasmacytoid dendritic cells (pDCs).

It is found in the cell membrane. The protein localises to the secreted. Functionally, lymphocyte activation gene 3 protein: Inhibitory receptor on antigen activated T-cells. Delivers inhibitory signals upon binding to ligands, such as FGL1. FGL1 constitutes a major ligand of LAG3 and is responsible for LAG3 T-cell inhibitory function. Following TCR engagement, LAG3 associates with CD3-TCR in the immunological synapse and directly inhibits T-cell activation. May inhibit antigen-specific T-cell activation in synergy with PDCD1/PD-1, possibly by acting as a coreceptor for PDCD1/PD-1. Negatively regulates the proliferation, activation, effector function and homeostasis of both CD8(+) and CD4(+) T-cells. Also mediates immune tolerance: constitutively expressed on a subset of regulatory T-cells (Tregs) and contributes to their suppressive function. Also acts as a negative regulator of plasmacytoid dendritic cell (pDCs) activation. Binds MHC class II (MHC-II); the precise role of MHC-II-binding is however unclear. In terms of biological role, may function as a ligand for MHC class II (MHC-II) on antigen-presenting cells (APC), promoting APC activation/maturation and driving Th1 immune response. This is Lymphocyte activation gene 3 protein from Mus musculus (Mouse).